A 112-amino-acid chain; its full sequence is Large ribosomal subunit protein uL22 (112 aa).

It belongs to the universal ribosomal protein uL22 family. As to quaternary structure, part of the 50S ribosomal subunit.

Its function is as follows. This protein binds specifically to 23S rRNA; its binding is stimulated by other ribosomal proteins, e.g. L4, L17, and L20. It is important during the early stages of 50S assembly. It makes multiple contacts with different domains of the 23S rRNA in the assembled 50S subunit and ribosome. The globular domain of the protein is located near the polypeptide exit tunnel on the outside of the subunit, while an extended beta-hairpin is found that lines the wall of the exit tunnel in the center of the 70S ribosome. The polypeptide is Large ribosomal subunit protein uL22 (Desulfovibrio desulfuricans (strain ATCC 27774 / DSM 6949 / MB)).